A 105-amino-acid chain; its full sequence is MRALGHLKHKAFRDLLCRRLFAEHEVERQSNLYIYRNPELPLRVRLEAKKRIEALPTNAHPTKIKNRCIETGRGRGVFRAFGLARFPFRLKALANKLPGVRKASW.

The protein belongs to the universal ribosomal protein uS14 family. In terms of assembly, component of the mitochondrial small ribosomal subunit (mt-SSU). Mature yeast 74S mitochondrial ribosomes consist of a small (37S) and a large (54S) subunit. The 37S small subunit contains a 15S ribosomal RNA (15S mt-rRNA) and at least 32 different proteins. The 54S large subunit contains a 21S rRNA (21S mt-rRNA) and at least 45 different proteins.

It localises to the mitochondrion. Functionally, component of the mitochondrial ribosome (mitoribosome), a dedicated translation machinery responsible for the synthesis of mitochondrial genome-encoded proteins, including at least some of the essential transmembrane subunits of the mitochondrial respiratory chain. The mitoribosomes are attached to the mitochondrial inner membrane and translation products are cotranslationally integrated into the membrane. In Schizosaccharomyces pombe (strain 972 / ATCC 24843) (Fission yeast), this protein is Small ribosomal subunit protein uS14m (mrp2).